We begin with the raw amino-acid sequence, 334 residues long: Ketol-acid reductoisomerase (NADP(+)) (334 aa).

The KARI N-terminal Rossmann domain occupies 1 to 181 (MNRYYDKNAD…GGGRTGILET (181 aa)). Residues 24–27 (YGSQ), arginine 47, serine 50, serine 52, and 82–85 (DEFQ) each bind NADP(+). The active site involves histidine 107. Position 133 (glycine 133) interacts with NADP(+). The region spanning 182 to 323 (SFKDETETDL…ESLRSMMPWI (142 aa)) is the KARI C-terminal knotted domain. Mg(2+)-binding residues include aspartate 190, glutamate 194, glutamate 226, and glutamate 230. A substrate-binding site is contributed by serine 251.

This sequence belongs to the ketol-acid reductoisomerase family. Mg(2+) is required as a cofactor.

It carries out the reaction (2R)-2,3-dihydroxy-3-methylbutanoate + NADP(+) = (2S)-2-acetolactate + NADPH + H(+). It catalyses the reaction (2R,3R)-2,3-dihydroxy-3-methylpentanoate + NADP(+) = (S)-2-ethyl-2-hydroxy-3-oxobutanoate + NADPH + H(+). Its pathway is amino-acid biosynthesis; L-isoleucine biosynthesis; L-isoleucine from 2-oxobutanoate: step 2/4. It functions in the pathway amino-acid biosynthesis; L-valine biosynthesis; L-valine from pyruvate: step 2/4. Involved in the biosynthesis of branched-chain amino acids (BCAA). Catalyzes an alkyl-migration followed by a ketol-acid reduction of (S)-2-acetolactate (S2AL) to yield (R)-2,3-dihydroxy-isovalerate. In the isomerase reaction, S2AL is rearranged via a Mg-dependent methyl migration to produce 3-hydroxy-3-methyl-2-ketobutyrate (HMKB). In the reductase reaction, this 2-ketoacid undergoes a metal-dependent reduction by NADPH to yield (R)-2,3-dihydroxy-isovalerate. This is Ketol-acid reductoisomerase (NADP(+)) from Ruthia magnifica subsp. Calyptogena magnifica.